The primary structure comprises 194 residues: Small ribosomal subunit protein uS7 (194 aa).

The protein belongs to the universal ribosomal protein uS7 family. As to quaternary structure, part of the 30S ribosomal subunit.

One of the primary rRNA binding proteins, it binds directly to 16S rRNA where it nucleates assembly of the head domain of the 30S subunit. Is located at the subunit interface close to the decoding center. This chain is Small ribosomal subunit protein uS7, found in Sulfurisphaera tokodaii (strain DSM 16993 / JCM 10545 / NBRC 100140 / 7) (Sulfolobus tokodaii).